The primary structure comprises 267 residues: Small ribosomal subunit protein uS2 (267 aa).

The disordered stretch occupies residues 247 to 267 (LEDDILEDVEDEEEGDPEQGE).

It belongs to the universal ribosomal protein uS2 family.

The chain is Small ribosomal subunit protein uS2 from Synechococcus sp. (strain JA-3-3Ab) (Cyanobacteria bacterium Yellowstone A-Prime).